A 140-amino-acid chain; its full sequence is Vacuolar protein sorting-associated protein 55 homolog (140 aa).

The Cytoplasmic portion of the chain corresponds to 1 to 16 (MADVPGYLRTCLDMGK). Residues 17–37 (IAFLAILVSTGIVLQILACAL) form a helical membrane-spanning segment. The Lumenal portion of the chain corresponds to 38–40 (FNN). Residues 41–61 (WWPMLSVIMYVLLPMPLLFFG) traverse the membrane as a helical segment. Residues 62–75 (GSDSTSLFNESDNS) are Cytoplasmic-facing. The helical transmembrane segment at 76–98 (WINAAKFLTGASAVGSVAIPSIL) threads the bilayer. Residues 99-108 (KHAGLIGWGA) are Lumenal-facing. Residues 109–129 (LALDLSSYVVFLVAILGYICI) traverse the membrane as a helical segment. Over 130-140 (GDASDNYYSYI) the chain is Cytoplasmic.

Belongs to the OB-RGRP/VPS55 family.

It is found in the endosome membrane. Its function is as follows. Involved in endosomal protein transport. This chain is Vacuolar protein sorting-associated protein 55 homolog, found in Arabidopsis thaliana (Mouse-ear cress).